A 487-amino-acid chain; its full sequence is CUGBP Elav-like family member 1 (487 aa).

An N-acetylmethionine modification is found at M1. A Phosphothreonine modification is found at T4. 2 RRM domains span residues 16-99 (IKMF…PADS) and 108-188 (RKLF…FADT). K109 is covalently cross-linked (Glycyl lysine isopeptide (Lys-Gly) (interchain with G-Cter in SUMO2)). Phosphoserine is present on residues S179 and S303. Residues 277–310 (TPSGTNALTTSSSPLSVLTSSAGSSPSSSSSNSV) form a disordered region. Positions 283–310 (ALTTSSSPLSVLTSSAGSSPSSSSSNSV) are enriched in low complexity. The RRM 3 domain occupies 402–480 (ANLFIYHLPQ…KRLKVQLKRS (79 aa)).

The protein belongs to the CELF/BRUNOL family. Interacts with HNRNPH1; the interaction in RNA-dependent. Interacts with PARN. Component of an EIF2 complex at least composed of CELF1/CUGBP1, CALR, CALR3, EIF2S1, EIF2S2, HSP90B1 and HSPA5. Associates with polysomes.

The protein localises to the nucleus. It localises to the cytoplasm. In terms of biological role, RNA-binding protein implicated in the regulation of several post-transcriptional events. Involved in pre-mRNA alternative splicing, mRNA translation and stability. Mediates exon inclusion and/or exclusion in pre-mRNA that are subject to tissue-specific and developmentally regulated alternative splicing. Specifically activates exon 5 inclusion of cardiac isoforms of TNNT2 during heart remodeling at the juvenile to adult transition. Acts both as an activator and as a repressor of a pair of coregulated exons: promotes inclusion of the smooth muscle (SM) exon but exclusion of the non-muscle (NM) exon in actinin pre-mRNAs. Activates SM exon 5 inclusion by antagonizing the repressive effect of PTB. Promotes exclusion of exon 11 of the INSR pre-mRNA. Inhibits, together with HNRNPH1, insulin receptor (IR) pre-mRNA exon 11 inclusion in myoblast. Increases translation and controls the choice of translation initiation codon of CEBPB mRNA. Increases mRNA translation of CEBPB in aging liver. Increases translation of CDKN1A mRNA by antagonizing the repressive effect of CALR3. Mediates rapid cytoplasmic mRNA deadenylation. Recruits the deadenylase PARN to the poly(A) tail of EDEN-containing mRNAs to promote their deadenylation. Required for completion of spermatogenesis. Binds to (CUG)n triplet repeats in the 3'-UTR of transcripts such as DMPK and to Bruno response elements (BREs). Binds to muscle-specific splicing enhancer (MSE) intronic sites flanking the alternative exon 5 of TNNT2 pre-mRNA. Binds to AU-rich sequences (AREs or EDEN-like) localized in the 3'-UTR of JUN and FOS mRNAs. Binds to the IR RNA. Binds to the 5'-region of CDKN1A and CEBPB mRNAs. Binds with the 5'-region of CEBPB mRNA in aging liver. May be a specific regulator of miRNA biogenesis. Binds to primary microRNA pri-MIR140 and, with CELF2, negatively regulates the processing to mature miRNA. The protein is CUGBP Elav-like family member 1 (Celf1) of Rattus norvegicus (Rat).